Reading from the N-terminus, the 319-residue chain is Oxaloacetate tautomerase fahd2, mitochondrial (319 aa).

A mitochondrion-targeting transit peptide spans 1–31; that stretch reads MLTQTRVALRVLKNAHLTLPKRNISQSPALS. Glutamate 164, glutamate 166, and aspartate 195 together coordinate Mg(2+).

It belongs to the FAH family. Requires Mg(2+) as cofactor. The cofactor is Mn(2+).

The protein resides in the mitochondrion. It catalyses the reaction oxaloacetate = enol-oxaloacetate. Its function is as follows. Tautomerase that converts enol-oxaloacetate, a strong inhibitor of succinate dehydrogenase, to the physiological keto form of oxaloacetate. It is thereby required to maximize aerobic respiration efficiency by preventing succinate dehydrogenase inhibition. The polypeptide is Oxaloacetate tautomerase fahd2, mitochondrial (fahd2) (Xenopus laevis (African clawed frog)).